Here is a 170-residue protein sequence, read N- to C-terminus: Crossover junction endodeoxyribonuclease RuvC (170 aa).

Active-site residues include D9, E70, and D145. Residues D9, E70, and D145 each coordinate Mg(2+).

This sequence belongs to the RuvC family. As to quaternary structure, homodimer which binds Holliday junction (HJ) DNA. The HJ becomes 2-fold symmetrical on binding to RuvC with unstacked arms; it has a different conformation from HJ DNA in complex with RuvA. In the full resolvosome a probable DNA-RuvA(4)-RuvB(12)-RuvC(2) complex forms which resolves the HJ. The cofactor is Mg(2+).

The protein localises to the cytoplasm. It catalyses the reaction Endonucleolytic cleavage at a junction such as a reciprocal single-stranded crossover between two homologous DNA duplexes (Holliday junction).. In terms of biological role, the RuvA-RuvB-RuvC complex processes Holliday junction (HJ) DNA during genetic recombination and DNA repair. Endonuclease that resolves HJ intermediates. Cleaves cruciform DNA by making single-stranded nicks across the HJ at symmetrical positions within the homologous arms, yielding a 5'-phosphate and a 3'-hydroxyl group; requires a central core of homology in the junction. The consensus cleavage sequence is 5'-(A/T)TT(C/G)-3'. Cleavage occurs on the 3'-side of the TT dinucleotide at the point of strand exchange. HJ branch migration catalyzed by RuvA-RuvB allows RuvC to scan DNA until it finds its consensus sequence, where it cleaves and resolves the cruciform DNA. This Chlamydia trachomatis serovar L2 (strain ATCC VR-902B / DSM 19102 / 434/Bu) protein is Crossover junction endodeoxyribonuclease RuvC.